A 106-amino-acid chain; its full sequence is MGRKKGLPEFEESAPDGFDPENPYKDPVAMVEMREHIVREKWIQIEKAKILREKVKWCYRVEGVNHYQKCRHLVQQYLDSTRGVGWGKDHRPISLHGPKPEAVEAE.

Residues 1 to 25 form a disordered region; it reads MGRKKGLPEFEESAPDGFDPENPYK.

Belongs to the complex I NDUFB10 subunit family. As to quaternary structure, complex I is composed of at least 49 different subunits.

It is found in the mitochondrion inner membrane. Its function is as follows. Accessory subunit of the mitochondrial membrane respiratory chain NADH dehydrogenase (Complex I), that is believed not to be involved in catalysis. Complex I functions in the transfer of electrons from NADH to the respiratory chain. The immediate electron acceptor for the enzyme is believed to be ubiquinone. The protein is NADH dehydrogenase [ubiquinone] 1 beta subcomplex subunit 10-B of Arabidopsis thaliana (Mouse-ear cress).